The primary structure comprises 283 residues: Cyclin-C (283 aa).

Residues asparagine 46–glutamate 144 form the Cyclin N-terminal domain. The tract at residues threonine 252–serine 283 is disordered. Over residues proline 272–serine 283 the composition is skewed to polar residues. Position 275 is a phosphoserine (serine 275).

This sequence belongs to the cyclin family. Cyclin C subfamily. Component of the Mediator complex, which is composed of MED1, MED4, MED6, MED7, MED8, MED9, MED10, MED11, MED12, MED13, MED13L, MED14, MED15, MED16, MED17, MED18, MED19, MED20, MED21, MED22, MED23, MED24, MED25, MED26, MED27, MED29, MED30, MED31, CCNC, CDK8 and CDC2L6/CDK11. The MED12, MED13, CCNC and CDK8 subunits form a distinct module termed the CDK8 module. Mediator containing the CDK8 module is less active than Mediator lacking this module in supporting transcriptional activation. Individual preparations of the Mediator complex lacking one or more distinct subunits have been variously termed ARC, CRSP, DRIP, PC2, SMCC and TRAP. The cylin/CDK pair formed by CCNC/CDK8 also associates with the large subunit of RNA polymerase II. In terms of tissue distribution, highest levels in pancreas. High levels in heart, liver, skeletal muscle and kidney. Low levels in brain.

Its subcellular location is the nucleus. In terms of biological role, component of the Mediator complex, a coactivator involved in regulated gene transcription of nearly all RNA polymerase II-dependent genes. Mediator functions as a bridge to convey information from gene-specific regulatory proteins to the basal RNA polymerase II transcription machinery. Mediator is recruited to promoters by direct interactions with regulatory proteins and serves as a scaffold for the assembly of a functional preinitiation complex with RNA polymerase II and the general transcription factors. Binds to and activates cyclin-dependent kinase CDK8 that phosphorylates the CTD (C-terminal domain) of the large subunit of RNA polymerase II (RNAp II), which may inhibit the formation of a transcription initiation complex. In Homo sapiens (Human), this protein is Cyclin-C (CCNC).